The primary structure comprises 739 residues: MSLMLEPNPTQIKEERIYAEMGLTDEEFAMVEKILGRLPNYTETGLFSVMWSEHCSYKNSKPVLRKFPTTGERVLQGPGEGAGIVDIGDNQAVVFKMESHNHPSAIEPYQGAATGVGGIIRDVFSMGARPVALLNSLRFGELQSPRVKYLFEEVVAGIAGYGNCIGIPTVGGEVQFDPCYEGNPLVNAMCVGLINHEDIKKGQAHGAGNTVMYVGASTGRDGIHGATFASEELSESSEAKRPAVQVGDPFMEKLLIEACLELIQSDALVGIQDMGAAGLTSSSAEMASKAGMGIEMYLDDVPQRETGMTPYEMMLSESQERMLIVVKKGREQEIVDLFEKYGLAAVTMGKVTEDKMLRLFHKGEMVAEVPADALAEEAPIYHKPSKEAAYFAEFQQMKMETPKVENYKETLFALLQQPTIASKEWVYDQYDYQVRTSTVVTPGSDAAVVRVRGTEKGLAMTTDCNSRYIYLDPEVGGKIAVAEAARNIVCSGGEPLAITDCLNFGNPEKPEIFWQIEKSVDGMSEACRTLQTPVIGGNVSMYNERSGEAVYPTPTVGMVGLVHDLKHVTTQEFKQAGDLVYVIGETKAEFGGSELQKMLHGKIFGQSPSIDLDVELKRQKQVLAAIQAGLVQSAHDVAEGGLAVAISESAIGANGLGATVKLDGEATAALFAESQSRFVITVKRENKEAFEKAVEAIQVGEVTNTNEVTIHNEENEVLLTANVDEMRKAWKGAIPCLLK.

His-54 is a catalytic residue. Tyr-57 and Lys-96 together coordinate ATP. Residue Glu-98 coordinates Mg(2+). Residues 99 to 102 (SHNH) and Arg-121 each bind substrate. His-100 functions as the Proton acceptor in the catalytic mechanism. A Mg(2+)-binding site is contributed by Asp-122. Residue Gln-245 coordinates substrate. Asp-273 contributes to the Mg(2+) binding site. A substrate-binding site is contributed by 317 to 319 (ESQ). ATP is bound by residues Asp-500 and Gly-537. A Mg(2+)-binding site is contributed by Asn-538. Residue Ser-540 participates in substrate binding.

The protein belongs to the FGAMS family. Monomer. Part of the FGAM synthase complex composed of 1 PurL, 1 PurQ and 2 PurS subunits.

It is found in the cytoplasm. The catalysed reaction is N(2)-formyl-N(1)-(5-phospho-beta-D-ribosyl)glycinamide + L-glutamine + ATP + H2O = 2-formamido-N(1)-(5-O-phospho-beta-D-ribosyl)acetamidine + L-glutamate + ADP + phosphate + H(+). Its pathway is purine metabolism; IMP biosynthesis via de novo pathway; 5-amino-1-(5-phospho-D-ribosyl)imidazole from N(2)-formyl-N(1)-(5-phospho-D-ribosyl)glycinamide: step 1/2. Its function is as follows. Part of the phosphoribosylformylglycinamidine synthase complex involved in the purines biosynthetic pathway. Catalyzes the ATP-dependent conversion of formylglycinamide ribonucleotide (FGAR) and glutamine to yield formylglycinamidine ribonucleotide (FGAM) and glutamate. The FGAM synthase complex is composed of three subunits. PurQ produces an ammonia molecule by converting glutamine to glutamate. PurL transfers the ammonia molecule to FGAR to form FGAM in an ATP-dependent manner. PurS interacts with PurQ and PurL and is thought to assist in the transfer of the ammonia molecule from PurQ to PurL. In Bacillus anthracis (strain A0248), this protein is Phosphoribosylformylglycinamidine synthase subunit PurL.